We begin with the raw amino-acid sequence, 522 residues long: Sugar transport protein 1 (522 aa).

The Cytoplasmic segment spans residues 1–22 (MPAGGFVVGDGQKAYPGKLTPF). Residues 23-43 (VLFTCVVAAMGGLIFGYDIGI) form a helical membrane-spanning segment. The Extracellular portion of the chain corresponds to 44–79 (SGGVTSMPSFLKRFFPSVYRKQQEDASTNQYCQYDS). A helical membrane pass occupies residues 80–100 (PTLTMFTSSLYLAALISSLVA). The Cytoplasmic segment spans residues 101–117 (STVTRKFGRRLSMLFGG). Residues 118–138 (ILFCAGALINGFAKHVWMLIV) traverse the membrane as a helical segment. The Extracellular segment spans residues 139–140 (GR). The chain crosses the membrane as a helical span at residues 141-161 (ILLGFGIGFANQAVPLYLSEM). Residues 162–171 (APYKYRGALN) are Cytoplasmic-facing. A helical transmembrane segment spans residues 172–192 (IGFQLSITIGILVAEVLNYFF). Residues 193 to 202 (AKIKGGWGWR) are Extracellular-facing. Residues 203 to 223 (LSLGGAVVPALIITIGSLVLP) traverse the membrane as a helical segment. Over 224 to 289 (DTPNSMIERG…YRPHLTMAVM (66 aa)) the chain is Cytoplasmic. Residue serine 252 is modified to Phosphoserine. Residues 290–310 (IPFFQQLTGINVIMFYAPVLF) form a helical membrane-spanning segment. Over 311–321 (NTIGFTTDASL) the chain is Extracellular. Residues 322 to 342 (MSAVVTGSVNVAATLVSIYGV) form a helical membrane-spanning segment. Over 343–348 (DRWGRR) the chain is Cytoplasmic. The chain crosses the membrane as a helical span at residues 349–369 (FLFLEGGTQMLICQAVVAACI). The Extracellular portion of the chain corresponds to 370–384 (GAKFGVDGTPGELPK). The helical transmembrane segment at 385–405 (WYAIVVVTFICIYVAGFAWSW) threads the bilayer. At 406–427 (GPLGWLVPSEIFPLEIRSAAQS) the chain is on the cytoplasmic side. Residues 428–448 (ITVSVNMIFTFIIAQIFLTML) traverse the membrane as a helical segment. The Extracellular segment spans residues 449–452 (CHLK). Residues 453–473 (FGLFLVFAFFVVVMSIFVYIF) traverse the membrane as a helical segment. At 474–522 (LPETKGIPIEEMGQVWRSHWYWSRFVEDGEYGNALEMGKNSNQAGTKHV) the chain is on the cytoplasmic side.

Belongs to the major facilitator superfamily. Sugar transporter (TC 2.A.1.1) family. As to expression, mostly expressed in young leaves, especially in guard cells (at protein level). Also present in roots.

Its subcellular location is the cell membrane. Major hexose transporter. Mediates an active uptake of hexoses, by sugar/hydrogen symport. Can transport glucose, 3-O-methylglucose, fructose, xylose, mannose, galactose, fucose, 2-deoxyglucose and arabinose. Confers sensitivity to galactose in seedlings. The polypeptide is Sugar transport protein 1 (STP1) (Arabidopsis thaliana (Mouse-ear cress)).